We begin with the raw amino-acid sequence, 297 residues long: Non-homologous end-joining factor 1 (297 aa).

The interval 1 to 131 is globular head; the sequence is MDARLLQLPW…ATVSTVCRHL (131 aa). The segment at 220-286 is C-terminal tail; sequence PKAPTHPKEE…LTHRPPAGAS (67 aa). Positions 222-297 are disordered; it reads APTHPKEEDT…PKKKAKGLFM (76 aa). A compositionally biased stretch (polar residues) spans 232 to 255; that stretch reads GNSASHRPMAESSSISFEKTVPTQ. Over residues 263-286 the composition is skewed to low complexity; it reads VSEPSQVPQSSVSCLTHRPPAGAS. An XLM motif is present at residues 287–297; the sequence is KPKKKAKGLFM. A compositionally biased stretch (basic residues) spans 287–297; that stretch reads KPKKKAKGLFM.

Belongs to the XRCC4-XLF family. XLF subfamily. Homodimer. Interacts with xrcc4; the interaction is direct and is mediated via a head-to-head interaction between N-terminal head regions. Component of the core long-range non-homologous end joining (NHEJ) complex (also named DNA-PK complex) composed of prkdc/DNA-PKcs, lig4, xrcc4, xrcc6/Ku70, xrcc5/Ku80 and nhej1/xlf.

It localises to the nucleus. Its function is as follows. DNA repair protein involved in DNA non-homologous end joining (NHEJ); required for double-strand break (DSB) repair and V(D)J recombination. It is also involved in telomere maintenance. Plays a key role in NHEJ by promoting the ligation of various mismatched and non-cohesive ends. In some studies, has been shown to associate with xrcc4 to form alternating helical filaments that bridge DNA and act like a bandage, holding together the broken DNA until it is repaired. Alternatively, it has also been shown that rather than forming filaments, a single nhej1 dimer interacts through both head domains with xrcc4 to promote the close alignment of DNA ends. The xrcc4-nhej1/xlf subcomplex binds to the DNA fragments of a DSB in a highly diffusive manner and robustly bridges two independent DNA molecules, holding the broken DNA fragments in close proximity to one other. The mobility of the bridges ensures that the ends remain accessible for further processing by other repair factors. This Xenopus laevis (African clawed frog) protein is Non-homologous end-joining factor 1.